A 139-amino-acid polypeptide reads, in one-letter code: Probable DNA-binding protein (139 aa).

The tract at residues D97–T139 is disordered.

The sequence is that of Probable DNA-binding protein from Homo sapiens (Human).